Here is a 413-residue protein sequence, read N- to C-terminus: Aspartate aminotransferase, cytoplasmic (413 aa).

Gly39 and Trp141 together coordinate L-aspartate. Ser149 carries the phosphoserine modification. Asn195 is an L-aspartate binding site. Lys259 carries the N6-(pyridoxal phosphate)lysine modification. Arg387 contributes to the L-aspartate binding site.

It belongs to the class-I pyridoxal-phosphate-dependent aminotransferase family. As to quaternary structure, homodimer. The cofactor is pyridoxal 5'-phosphate.

It is found in the cytoplasm. It catalyses the reaction L-aspartate + 2-oxoglutarate = oxaloacetate + L-glutamate. It carries out the reaction L-cysteine + 2-oxoglutarate = 2-oxo-3-sulfanylpropanoate + L-glutamate. The enzyme catalyses (2S)-2-aminobutanoate + 2-oxoglutarate = 2-oxobutanoate + L-glutamate. The catalysed reaction is 3-sulfino-L-alanine + 2-oxoglutarate = 3-sulfinopyruvate + L-glutamate. Biosynthesis of L-glutamate from L-aspartate or L-cysteine. Important regulator of levels of glutamate, the major excitatory neurotransmitter of the vertebrate central nervous system. Acts as a scavenger of glutamate in brain neuroprotection. The aspartate aminotransferase activity is involved in hepatic glucose synthesis during development and in adipocyte glyceroneogenesis. Using L-cysteine as substrate, regulates levels of mercaptopyruvate, an important source of hydrogen sulfide. Mercaptopyruvate is converted into H(2)S via the action of 3-mercaptopyruvate sulfurtransferase (3MST). Hydrogen sulfide is an important synaptic modulator and neuroprotectant in the brain. In addition, catalyzes (2S)-2-aminobutanoate, a by-product in the cysteine biosynthesis pathway. This is Aspartate aminotransferase, cytoplasmic from Homo sapiens (Human).